Reading from the N-terminus, the 167-residue chain is 3-dehydroquinate dehydratase (167 aa).

Tyrosine 22 serves as the catalytic Proton acceptor. Substrate contacts are provided by asparagine 76, histidine 82, and aspartate 89. The active-site Proton donor is histidine 102. Residues leucine 103–threonine 104 and arginine 113 contribute to the substrate site.

It belongs to the type-II 3-dehydroquinase family. In terms of assembly, homododecamer.

It carries out the reaction 3-dehydroquinate = 3-dehydroshikimate + H2O. The protein operates within metabolic intermediate biosynthesis; chorismate biosynthesis; chorismate from D-erythrose 4-phosphate and phosphoenolpyruvate: step 3/7. Catalyzes a trans-dehydration via an enolate intermediate. The chain is 3-dehydroquinate dehydratase from Helicobacter pylori (strain Shi470).